The primary structure comprises 720 residues: Inactive serine protease PAMR1 (720 aa).

Positions 1–21 (MELGCWTQLGLTFLQLLLISS) are cleaved as a signal peptide. 8 disulfide bridges follow: C128/C150, C177/C199, C239/C250, C244/C260, C262/C271, C280/C329, C315/C342, and C414/C442. One can recognise a CUB domain in the interval 128-236 (CGQVLRAPKG…DGFHAIFEEI (109 aa)). Positions 235-272 (EITACSSSPCFHDGTCVLDKAGSYKCACLAGYTGQRCE) constitute an EGF-like domain. Sushi domains lie at 278-344 (RNCS…ICIK) and 387-444 (APTK…SCIP). Residues 445 to 720 (ICGKIENVTA…FKDWIERNMK (276 aa)) form the Peptidase S1 domain. Residue N451 is glycosylated (N-linked (GlcNAc...) asparagine). An intrachain disulfide couples C489 to C505. N-linked (GlcNAc...) asparagine glycosylation occurs at N614. 2 cysteine pairs are disulfide-bonded: C630-C649 and C661-C697.

It belongs to the peptidase S1 family.

It is found in the secreted. Its function is as follows. May play a role in regeneration of skeletal muscle. The protein is Inactive serine protease PAMR1 (PAMR1) of Pongo abelii (Sumatran orangutan).